A 417-amino-acid chain; its full sequence is Probable histone-binding protein lin-53 (417 aa).

6 WD repeats span residues Asn118–Arg158, Gly170–Gly210, Gly220–Cys260, Ala263–His303, Ser307–Ser347, and Gly364–Val404.

It belongs to the WD repeat RBAP46/RBAP48/MSI1 family. In terms of assembly, binds directly to helix 1 of the histone fold of histone H4, a region that is not accessible when H4 is in chromatin. Probable component of a NuRD-like complex, composed of at least lin-53 and hda-1. Interacts with lin-35. Interacts with hda-1; the interaction is direct. Component of the DRM complex, at least composed of lin-9, lin-35, lin-37, lin-52, lin-53, lin-54- dpl-1 and efl-1. Interacts with hcp-3.

It is found in the nucleus. The protein localises to the chromosome. The protein resides in the centromere. Its function is as follows. Core histone-binding subunit that may target chromatin assembly factors, chromatin remodeling factors and histone deacetylases to their histone substrates in a manner that is regulated by nucleosomal DNA. Required for hcp-3 and his-1 stabilization, localization of hcp-3 to centromeres and for proper chromosome segregation. Synthetic multivulva class B (synMuvB) protein. SynMuvB proteins are required to repress the induction of vulval development by Ras signaling and probably act by forming the multiprotein DRM complex that represses transcription. This Caenorhabditis elegans protein is Probable histone-binding protein lin-53.